The primary structure comprises 143 residues: Large ribosomal subunit protein uL11 (143 aa).

It belongs to the universal ribosomal protein uL11 family. As to quaternary structure, part of the ribosomal stalk of the 50S ribosomal subunit. Interacts with L10 and the large rRNA to form the base of the stalk. L10 forms an elongated spine to which L12 dimers bind in a sequential fashion forming a multimeric L10(L12)X complex. In terms of processing, one or more lysine residues are methylated.

In terms of biological role, forms part of the ribosomal stalk which helps the ribosome interact with GTP-bound translation factors. This Borreliella afzelii (strain PKo) (Borrelia afzelii) protein is Large ribosomal subunit protein uL11.